The chain runs to 638 residues: Threonine--tRNA ligase (638 aa).

Positions 1-61 constitute a TGS domain; it reads MVAITLPDGK…DRDVNLSIIT (61 aa). The tract at residues 244 to 536 is catalytic; sequence DHRRLGREME…LIENFAGRFP (293 aa). The Zn(2+) site is built by Cys336, His387, and His513.

It belongs to the class-II aminoacyl-tRNA synthetase family. Homodimer. It depends on Zn(2+) as a cofactor.

The protein localises to the cytoplasm. It carries out the reaction tRNA(Thr) + L-threonine + ATP = L-threonyl-tRNA(Thr) + AMP + diphosphate + H(+). In terms of biological role, catalyzes the attachment of threonine to tRNA(Thr) in a two-step reaction: L-threonine is first activated by ATP to form Thr-AMP and then transferred to the acceptor end of tRNA(Thr). Also edits incorrectly charged L-seryl-tRNA(Thr). The protein is Threonine--tRNA ligase of Paramagnetospirillum magneticum (strain ATCC 700264 / AMB-1) (Magnetospirillum magneticum).